The chain runs to 364 residues: Protein-glutamate methylesterase/protein-glutamine glutaminase 1 (364 aa).

The region spanning 6–123 (KVLCVDDSAL…RDGMLDYSEK (118 aa)) is the Response regulatory domain. The residue at position 57 (Asp57) is a 4-aspartylphosphate. Residues 165–357 (LVSTEKLIIV…RRIMARLASM (193 aa)) enclose the CheB-type methylesterase domain. Catalysis depends on residues Ser177, His203, and Asp299.

It belongs to the CheB family. Phosphorylated by CheA. Phosphorylation of the N-terminal regulatory domain activates the methylesterase activity.

It localises to the cytoplasm. It carries out the reaction [protein]-L-glutamate 5-O-methyl ester + H2O = L-glutamyl-[protein] + methanol + H(+). It catalyses the reaction L-glutaminyl-[protein] + H2O = L-glutamyl-[protein] + NH4(+). In terms of biological role, involved in chemotaxis. Part of a chemotaxis signal transduction system that modulates chemotaxis in response to various stimuli. Catalyzes the demethylation of specific methylglutamate residues introduced into the chemoreceptors (methyl-accepting chemotaxis proteins or MCP) by CheR. Also mediates the irreversible deamidation of specific glutamine residues to glutamic acid. The sequence is that of Protein-glutamate methylesterase/protein-glutamine glutaminase 1 from Burkholderia mallei (strain ATCC 23344).